A 725-amino-acid polypeptide reads, in one-letter code: Ribonuclease R (725 aa).

Positions Arg-264–Phe-592 constitute an RNB domain. Residues Gly-644 to Ile-725 enclose the S1 motif domain.

The protein belongs to the RNR ribonuclease family. RNase R subfamily.

The protein localises to the cytoplasm. The enzyme catalyses Exonucleolytic cleavage in the 3'- to 5'-direction to yield nucleoside 5'-phosphates.. In terms of biological role, 3'-5' exoribonuclease that releases 5'-nucleoside monophosphates and is involved in maturation of structured RNAs. The chain is Ribonuclease R from Mycoplasma genitalium (strain ATCC 33530 / DSM 19775 / NCTC 10195 / G37) (Mycoplasmoides genitalium).